Here is a 277-residue protein sequence, read N- to C-terminus: Protein RKD3 (277 aa).

Positions 142 to 226 constitute an RWP-RK domain; sequence KRIIMKRRYR…LGNTKGRTPK (85 aa). The stretch at 201–246 forms a coiled coil; sequence RKLTSLNALIANLKDLLGNTKGRTPKSKLRNALELLEMEKKMIEEV.

The protein localises to the nucleus. In terms of biological role, putative transcription factor. The sequence is that of Protein RKD3 (RKD3) from Arabidopsis thaliana (Mouse-ear cress).